The chain runs to 393 residues: Isocitrate dehydrogenase [NAD] subunit gamma, mitochondrial (393 aa).

The transit peptide at 1–39 directs the protein to the mitochondrion; sequence MALKVATVAGSAAKAVLGPALLCRPWEVLGAHEVPSRNI. Threonine 120 and asparagine 133 together coordinate citrate. The substrate site is built by arginine 136, arginine 167, and aspartate 254. Residue aspartate 254 coordinates Mn(2+). ADP is bound by residues asparagine 312, threonine 313, and asparagine 324.

It belongs to the isocitrate and isopropylmalate dehydrogenases family. Heterooligomer of subunits alpha (IDH3A), beta (IDH3B), and gamma (IDH3G) in the apparent ratio of 2:1:1. The heterodimer containing one IDH3A and one IDH3B subunit and the heterodimer containing one IDH3A and one IDH3G subunit assemble into a heterotetramer (which contains two subunits of IDH3A, one of IDH3B and one of IDH3G) and further into the heterooctamer. The cofactor is Mg(2+). Mn(2+) serves as cofactor.

The protein localises to the mitochondrion. With respect to regulation, the heterotetramer and the heterodimer composed of IDH3A and IDH3G subunits can be allosterically activated by citrate (CIT) or/and ADP, and the two activators can act independently or synergistically. The heterodimer composed of IDH3A and IDH3B subunits cannot be allosterically regulated and the allosteric regulation of the heterotetramer is through the IDH3G subunit and not the IDH3B subunit. The IDH3G subunit contains the allosteric site which consists of a CIT-binding site and an ADP-binding site, and the binding of CIT and ADP causes conformational changes at the allosteric site which are transmitted to the active site in the catalytic subunit (IDH3A) through a cascade of conformational changes at the heterodimer interface, leading to stabilization of the isocitrate-binding at the active site and thus activation of the enzyme. ATP can activate the heterotetramer and the heterodimer composed of IDH3A and IDH3G subunits at low concentrations but inhibits their activities at high concentrations, whereas ATP exhibits only inhibitory effect on the heterodimer composed of IDH3A and IDH3B subunits. In terms of biological role, regulatory subunit which plays a role in the allosteric regulation of the enzyme catalyzing the decarboxylation of isocitrate (ICT) into alpha-ketoglutarate. The heterodimer composed of the alpha (IDH3A) and beta (IDH3B) subunits and the heterodimer composed of the alpha (IDH3A) and gamma (IDH3G) subunits, have considerable basal activity but the full activity of the heterotetramer (containing two subunits of IDH3A, one of IDH3B and one of IDH3G) requires the assembly and cooperative function of both heterodimers. In Homo sapiens (Human), this protein is Isocitrate dehydrogenase [NAD] subunit gamma, mitochondrial (IDH3G).